Consider the following 96-residue polypeptide: Aspartyl/glutamyl-tRNA(Asn/Gln) amidotransferase subunit C (96 aa).

The protein belongs to the GatC family. In terms of assembly, heterotrimer of A, B and C subunits.

It carries out the reaction L-glutamyl-tRNA(Gln) + L-glutamine + ATP + H2O = L-glutaminyl-tRNA(Gln) + L-glutamate + ADP + phosphate + H(+). It catalyses the reaction L-aspartyl-tRNA(Asn) + L-glutamine + ATP + H2O = L-asparaginyl-tRNA(Asn) + L-glutamate + ADP + phosphate + 2 H(+). Allows the formation of correctly charged Asn-tRNA(Asn) or Gln-tRNA(Gln) through the transamidation of misacylated Asp-tRNA(Asn) or Glu-tRNA(Gln) in organisms which lack either or both of asparaginyl-tRNA or glutaminyl-tRNA synthetases. The reaction takes place in the presence of glutamine and ATP through an activated phospho-Asp-tRNA(Asn) or phospho-Glu-tRNA(Gln). The chain is Aspartyl/glutamyl-tRNA(Asn/Gln) amidotransferase subunit C from Bacillus licheniformis (strain ATCC 14580 / DSM 13 / JCM 2505 / CCUG 7422 / NBRC 12200 / NCIMB 9375 / NCTC 10341 / NRRL NRS-1264 / Gibson 46).